Reading from the N-terminus, the 147-residue chain is MFTGPIVAVGEYVEGLGEGRRYVSIPYYRREIERVIGARPFPGTFNVRVEREERESLRELASSYGYRIEPHGEYGGAWLYPCLVNGRPAWLVFPDLTEHRDQVELISETELRRELNVIHGDMVKIEVWGPSTWKLARRLTCGPSGGR.

15–20 (GLGEGR) contacts CDP. Mg(2+) contacts are provided by threonine 44 and asparagine 46. FMN-binding residues include threonine 97 and glutamate 104. A CDP-binding site is contributed by 109–112 (TELR).

It belongs to the archaeal riboflavin kinase family. Mg(2+) serves as cofactor.

It catalyses the reaction riboflavin + CTP = CDP + FMN + H(+). The protein operates within cofactor biosynthesis; FMN biosynthesis; FMN from riboflavin (CTP route): step 1/1. Functionally, catalyzes the CTP-dependent phosphorylation of riboflavin (vitamin B2) to form flavin mononucleotide (FMN). This Methanopyrus kandleri (strain AV19 / DSM 6324 / JCM 9639 / NBRC 100938) protein is Riboflavin kinase.